The following is a 201-amino-acid chain: Ribosome maturation factor RimP (201 aa).

It belongs to the RimP family.

The protein localises to the cytoplasm. Required for maturation of 30S ribosomal subunits. The sequence is that of Ribosome maturation factor RimP from Acidiphilium cryptum (strain JF-5).